A 709-amino-acid polypeptide reads, in one-letter code: Methylmalonyl-CoA mutase (709 aa).

Residues 73-77 (TIRQY), 183-185 (TIQ), Arg-195, Lys-222, His-232, and 271-273 (RLS) each bind substrate. The region spanning 579–709 (RPRMLVVKMG…ILDLIREARS (131 aa)) is the B12-binding domain. His-592 lines the adenosylcob(III)alamin pocket.

This sequence belongs to the methylmalonyl-CoA mutase family. In terms of assembly, homodimer. Adenosylcob(III)alamin is required as a cofactor.

The catalysed reaction is (R)-methylmalonyl-CoA = succinyl-CoA. The protein operates within metabolic intermediate metabolism; propanoyl-CoA degradation; succinyl-CoA from propanoyl-CoA: step 3/3. Functionally, radical enzyme that catalyzes the transformation of (2R)-methylmalonyl-CoA to succinyl-CoA. Is involved in the ethylmalonyl-CoA pathway for acetyl-CoA assimilation required for R.sphaeroides growth on acetate as sole carbon source. The sequence is that of Methylmalonyl-CoA mutase from Cereibacter sphaeroides (strain ATCC 17023 / DSM 158 / JCM 6121 / CCUG 31486 / LMG 2827 / NBRC 12203 / NCIMB 8253 / ATH 2.4.1.) (Rhodobacter sphaeroides).